We begin with the raw amino-acid sequence, 616 residues long: Dihydroxy-acid dehydratase (616 aa).

Asp-81 serves as a coordination point for Mg(2+). [2Fe-2S] cluster is bound at residue Cys-122. Asp-123 and Lys-124 together coordinate Mg(2+). Lys-124 is modified (N6-carboxylysine). Cys-195 lines the [2Fe-2S] cluster pocket. Glu-491 is a binding site for Mg(2+). Ser-517 acts as the Proton acceptor in catalysis.

It belongs to the IlvD/Edd family. In terms of assembly, homodimer. [2Fe-2S] cluster serves as cofactor. Requires Mg(2+) as cofactor.

The catalysed reaction is (2R)-2,3-dihydroxy-3-methylbutanoate = 3-methyl-2-oxobutanoate + H2O. It carries out the reaction (2R,3R)-2,3-dihydroxy-3-methylpentanoate = (S)-3-methyl-2-oxopentanoate + H2O. Its pathway is amino-acid biosynthesis; L-isoleucine biosynthesis; L-isoleucine from 2-oxobutanoate: step 3/4. It participates in amino-acid biosynthesis; L-valine biosynthesis; L-valine from pyruvate: step 3/4. Functionally, functions in the biosynthesis of branched-chain amino acids. Catalyzes the dehydration of (2R,3R)-2,3-dihydroxy-3-methylpentanoate (2,3-dihydroxy-3-methylvalerate) into 2-oxo-3-methylpentanoate (2-oxo-3-methylvalerate) and of (2R)-2,3-dihydroxy-3-methylbutanoate (2,3-dihydroxyisovalerate) into 2-oxo-3-methylbutanoate (2-oxoisovalerate), the penultimate precursor to L-isoleucine and L-valine, respectively. The polypeptide is Dihydroxy-acid dehydratase (Yersinia pseudotuberculosis serotype O:3 (strain YPIII)).